A 468-amino-acid polypeptide reads, in one-letter code: Glycine--tRNA ligase (468 aa).

Residues Arg-101 and Glu-170 each coordinate substrate. ATP-binding positions include 202-204 (RNE), 212-217 (FRTREF), 289-290 (EL), and 333-336 (GLTR). Residue 217-221 (FEQME) participates in substrate binding. 329–333 (EPAAG) contacts substrate.

The protein belongs to the class-II aminoacyl-tRNA synthetase family. In terms of assembly, homodimer.

It localises to the cytoplasm. It catalyses the reaction tRNA(Gly) + glycine + ATP = glycyl-tRNA(Gly) + AMP + diphosphate. Functionally, catalyzes the attachment of glycine to tRNA(Gly). The sequence is that of Glycine--tRNA ligase from Mycolicibacterium vanbaalenii (strain DSM 7251 / JCM 13017 / BCRC 16820 / KCTC 9966 / NRRL B-24157 / PYR-1) (Mycobacterium vanbaalenii).